A 326-amino-acid chain; its full sequence is Putative HTH-type transcriptional regulator y4qH (326 aa).

One can recognise an HTH luxR-type domain in the interval Ala-257–Gly-322. A DNA-binding region (H-T-H motif) is located at residues Ser-281–Lys-300.

This sequence belongs to the autoinducer-regulated transcriptional regulatory protein family.

This Sinorhizobium fredii (strain NBRC 101917 / NGR234) protein is Putative HTH-type transcriptional regulator y4qH.